The primary structure comprises 186 residues: Peptidyl-tRNA hydrolase (186 aa).

Tyrosine 16 is a binding site for tRNA. Histidine 21 (proton acceptor) is an active-site residue. Residues tyrosine 60 and asparagine 62 each contribute to the tRNA site.

It belongs to the PTH family. As to quaternary structure, monomer.

The protein resides in the cytoplasm. The enzyme catalyses an N-acyl-L-alpha-aminoacyl-tRNA + H2O = an N-acyl-L-amino acid + a tRNA + H(+). Its function is as follows. Hydrolyzes ribosome-free peptidyl-tRNAs (with 1 or more amino acids incorporated), which drop off the ribosome during protein synthesis, or as a result of ribosome stalling. In terms of biological role, catalyzes the release of premature peptidyl moieties from peptidyl-tRNA molecules trapped in stalled 50S ribosomal subunits, and thus maintains levels of free tRNAs and 50S ribosomes. The sequence is that of Peptidyl-tRNA hydrolase from Tropheryma whipplei (strain TW08/27) (Whipple's bacillus).